A 603-amino-acid polypeptide reads, in one-letter code: Elongation factor 4 (603 aa).

The tr-type G domain occupies 9–191 (SNIRNFSIIA…RIVRQIPPPK (183 aa)). GTP-binding positions include 21–26 (DHGKST) and 138–141 (NKID).

Belongs to the TRAFAC class translation factor GTPase superfamily. Classic translation factor GTPase family. LepA subfamily.

The protein resides in the cell inner membrane. The enzyme catalyses GTP + H2O = GDP + phosphate + H(+). Functionally, required for accurate and efficient protein synthesis under certain stress conditions. May act as a fidelity factor of the translation reaction, by catalyzing a one-codon backward translocation of tRNAs on improperly translocated ribosomes. Back-translocation proceeds from a post-translocation (POST) complex to a pre-translocation (PRE) complex, thus giving elongation factor G a second chance to translocate the tRNAs correctly. Binds to ribosomes in a GTP-dependent manner. This Idiomarina loihiensis (strain ATCC BAA-735 / DSM 15497 / L2-TR) protein is Elongation factor 4.